A 151-amino-acid polypeptide reads, in one-letter code: MPKYYCDYCDTYLTHDSPSVRKTHCTGRKHKDNVKFYYQKWMEEQAQHLIDATTAAYKAGKIAQNPFTAGPPKPNISIPPPTMNMPPRPGIIPGMPAGAPPLLMGPNGPLPPPMMGMRPPPMMVPTMGMPPMGLGMRPPVMSAAPPQLNPK.

The Matrin-type zinc-finger motif lies at 4-36 (YYCDYCDTYLTHDSPSVRKTHCTGRKHKDNVKF).

The protein belongs to the U1 small nuclear ribonucleoprotein C family. In terms of assembly, U1 snRNP is composed of the 7 core Sm proteins B/B', D1, D2, D3, E, F and G that assemble in a heptameric protein ring on the Sm site of the small nuclear RNA to form the core snRNP, and at least 3 U1 snRNP-specific proteins U1-70K, U1-A and U1-C. U1-C interacts with U1 snRNA and the 5' splice-site region of the pre-mRNA.

The protein resides in the nucleus. Its function is as follows. Component of the spliceosomal U1 snRNP, which is essential for recognition of the pre-mRNA 5' splice-site and the subsequent assembly of the spliceosome. U1-C is directly involved in initial 5' splice-site recognition for both constitutive and regulated alternative splicing. The interaction with the 5' splice-site seems to precede base-pairing between the pre-mRNA and the U1 snRNA. Stimulates commitment or early (E) complex formation by stabilizing the base pairing of the 5' end of the U1 snRNA and the 5' splice-site region. In Anopheles darlingi (Mosquito), this protein is U1 small nuclear ribonucleoprotein C.